Here is a 405-residue protein sequence, read N- to C-terminus: Cysteine desulfurase IscS (405 aa).

Pyridoxal 5'-phosphate is bound by residues 75–76 (AT), asparagine 156, glutamine 184, and 204–206 (SAH). Lysine 207 is subject to N6-(pyridoxal phosphate)lysine. Residue threonine 244 participates in pyridoxal 5'-phosphate binding. Catalysis depends on cysteine 329, which acts as the Cysteine persulfide intermediate. Residue cysteine 329 coordinates [2Fe-2S] cluster.

Belongs to the class-V pyridoxal-phosphate-dependent aminotransferase family. NifS/IscS subfamily. Homodimer. Forms a heterotetramer with IscU, interacts with other sulfur acceptors. Pyridoxal 5'-phosphate is required as a cofactor.

It is found in the cytoplasm. The enzyme catalyses (sulfur carrier)-H + L-cysteine = (sulfur carrier)-SH + L-alanine. It participates in cofactor biosynthesis; iron-sulfur cluster biosynthesis. Its function is as follows. Master enzyme that delivers sulfur to a number of partners involved in Fe-S cluster assembly, tRNA modification or cofactor biosynthesis. Catalyzes the removal of elemental sulfur atoms from cysteine to produce alanine. Functions as a sulfur delivery protein for Fe-S cluster synthesis onto IscU, an Fe-S scaffold assembly protein, as well as other S acceptor proteins. In Methylobacillus flagellatus (strain ATCC 51484 / DSM 6875 / VKM B-1610 / KT), this protein is Cysteine desulfurase IscS.